The primary structure comprises 119 residues: uncharacterized protein (119 aa).

A coiled-coil region spans residues 6–36 (QAYLDIQGKIAEFRREIKALRVEEKAITANL). A disordered region spans residues 95–119 (AVTGSSSNVKIRKSAPARNEEDDDG).

This is an uncharacterized protein from Frog virus 3 (isolate Goorha) (FV-3).